The primary structure comprises 73 residues: Neutrophil elastase 2B (73 aa).

Residues isoleucine 1 to leucine 73 form the Peptidase S1 domain. The active-site Charge relay system is the serine 64.

Belongs to the peptidase S1 family. Elastase subfamily.

Functionally, may be involved in the degradation of connective tissue in chronic lung disease. The chain is Neutrophil elastase 2B from Equus caballus (Horse).